The following is a 111-amino-acid chain: Large ribosomal subunit protein bL20c (111 aa).

The protein belongs to the bacterial ribosomal protein bL20 family.

The protein localises to the plastid. The protein resides in the chloroplast. In terms of biological role, binds directly to 23S ribosomal RNA and is necessary for the in vitro assembly process of the 50S ribosomal subunit. It is not involved in the protein synthesizing functions of that subunit. In Ostreococcus tauri, this protein is Large ribosomal subunit protein bL20c.